Reading from the N-terminus, the 443-residue chain is MSEMTPPQIVSELNKFIIGQEQAKKAVAIALRNRWRRMQLNNELRHEITPKNILMIGPTGVGKTEIARRLAKLANSPFIKVEATKFTEVGYVGKEVDSIIRDLTDAAIKMIRVKNIEKNKLRVEEIVEERILDVLVPRPKNNWTENEKNESLLNTLQVFRKKLREGILDEKEIEINVLASTMGVEIMAPPGMEELTSQLQSLFQNLGGHKKNTRRLKIKDAVLLLKEEEAAKLINQEEIKKEAINAVEQNGIVFVDEIDKICKRRDSSGPDVSREGVQRDLLPLVEGCTVSTKYGMVKTDHILFIASGAFQTSTPSDLIPELQGRLPIKVELQPLTINDFEKILTEPTASITAQYKALMKTEGVCINFTKEGIRNIAEAAWKVNESMENIGARRLHTILEKLMEDISFNACDNVGKTIEINSEYVGKHLDQLISNEDLGRFIL.

Residues Ile-18, 60–65 (GVGKTE), Asp-256, Glu-321, and Arg-393 each bind ATP.

The protein belongs to the ClpX chaperone family. HslU subfamily. A double ring-shaped homohexamer of HslV is capped on each side by a ring-shaped HslU homohexamer. The assembly of the HslU/HslV complex is dependent on binding of ATP.

It is found in the cytoplasm. Functionally, ATPase subunit of a proteasome-like degradation complex; this subunit has chaperone activity. The binding of ATP and its subsequent hydrolysis by HslU are essential for unfolding of protein substrates subsequently hydrolyzed by HslV. HslU recognizes the N-terminal part of its protein substrates and unfolds these before they are guided to HslV for hydrolysis. This Buchnera aphidicola subsp. Schizaphis graminum (strain Sg) protein is ATP-dependent protease ATPase subunit HslU.